The following is a 129-amino-acid chain: Glycine cleavage system H protein (129 aa).

A Lipoyl-binding domain is found at 24-106 (TYTVGITEHA…YAGGWIFKIK (83 aa)). An N6-lipoyllysine modification is found at lysine 65.

Belongs to the GcvH family. The glycine cleavage system is composed of four proteins: P, T, L and H. (R)-lipoate serves as cofactor.

The glycine cleavage system catalyzes the degradation of glycine. The H protein shuttles the methylamine group of glycine from the P protein to the T protein. The protein is Glycine cleavage system H protein of Escherichia fergusonii (strain ATCC 35469 / DSM 13698 / CCUG 18766 / IAM 14443 / JCM 21226 / LMG 7866 / NBRC 102419 / NCTC 12128 / CDC 0568-73).